We begin with the raw amino-acid sequence, 330 residues long: Succinylglutamate desuccinylase (330 aa).

The Zn(2+) site is built by H53, E56, and H147. Residue E210 is part of the active site.

The protein belongs to the AspA/AstE family. Succinylglutamate desuccinylase subfamily. Zn(2+) serves as cofactor.

The catalysed reaction is N-succinyl-L-glutamate + H2O = L-glutamate + succinate. Its pathway is amino-acid degradation; L-arginine degradation via AST pathway; L-glutamate and succinate from L-arginine: step 5/5. In terms of biological role, transforms N(2)-succinylglutamate into succinate and glutamate. This is Succinylglutamate desuccinylase from Yersinia enterocolitica serotype O:8 / biotype 1B (strain NCTC 13174 / 8081).